The sequence spans 483 residues: Probable cytosol aminopeptidase (483 aa).

Residues K252 and D257 each coordinate Mn(2+). K264 is a catalytic residue. Positions 275, 334, and 336 each coordinate Mn(2+). Residue R338 is part of the active site.

This sequence belongs to the peptidase M17 family. Mn(2+) is required as a cofactor.

It is found in the cytoplasm. It catalyses the reaction Release of an N-terminal amino acid, Xaa-|-Yaa-, in which Xaa is preferably Leu, but may be other amino acids including Pro although not Arg or Lys, and Yaa may be Pro. Amino acid amides and methyl esters are also readily hydrolyzed, but rates on arylamides are exceedingly low.. The enzyme catalyses Release of an N-terminal amino acid, preferentially leucine, but not glutamic or aspartic acids.. Presumably involved in the processing and regular turnover of intracellular proteins. Catalyzes the removal of unsubstituted N-terminal amino acids from various peptides. The protein is Probable cytosol aminopeptidase of Legionella pneumophila (strain Corby).